The following is a 221-amino-acid chain: Veficolin-1 (221 aa).

Residues 1–25 (MTAWLDFPLALSPLVVVSMKGGSFG) form the signal peptide. The Collagen-like domain occupies 50 to 104 (QGQAGIPGIPGVPGTNGLPGAKGDLGPQGPPGERGSTGIPGKAGPKGDKGDQGEA). A disordered region spans residues 54–104 (GIPGIPGVPGTNGLPGAKGDLGPQGPPGERGSTGIPGKAGPKGDKGDQGEA). Residues 111–221 (QQQEAGAKDC…DFNNSKTFAK (111 aa)) form the Fibrinogen C-terminal domain. Cys120 and Cys148 are disulfide-bonded.

This sequence belongs to the ficolin lectin family. Veficolin subfamily. Expressed by the mandibular venom duct.

Its subcellular location is the secreted. Its function is as follows. Initiates complement activation and/or interferes in platelet aggregation and/or blood coagulation. This is Veficolin-1 from Varanus komodoensis (Komodo dragon).